The following is a 1300-amino-acid chain: Insulin receptor-related protein (1300 aa).

A signal peptide spans 1-26 (MARPKLWPWGILLLVSLLSAGFNLDT). N-linked (GlcNAc...) asparagine glycosylation occurs at asparagine 47. Disulfide bonds link cysteine 214/cysteine 222, cysteine 216/cysteine 228, cysteine 229/cysteine 237, cysteine 233/cysteine 246, cysteine 249/cysteine 258, cysteine 262/cysteine 274, cysteine 280/cysteine 300, cysteine 304/cysteine 317, and cysteine 320/cysteine 324. A glycan (N-linked (GlcNAc...) asparagine) is linked at asparagine 311. 8 N-linked (GlcNAc...) asparagine glycosylation sites follow: asparagine 411, asparagine 492, asparagine 528, asparagine 616, asparagine 634, asparagine 756, asparagine 885, and asparagine 898. Fibronectin type-III domains are found at residues 483-603 (QTRT…TLPA) and 607-707 (VPQD…AQEA). Cysteines 657 and 864 form a disulfide. The segment at 740–762 (DAGRHRRAIGSPRPGGNSSDFEI) is disordered. Residues 747 to 921 (AIGSPRPGGN…PEEEDSGGLH (175 aa)) lie on the Extracellular side of the membrane. One can recognise a Fibronectin type-III 3 domain in the interval 818 to 912 (IPGKLSWEAA…DSVAFYIPGP (95 aa)). Residues 922-943 (ILLTVTPAGLMLLIILAALGFF) form a helical membrane-spanning segment. The Cytoplasmic portion of the chain corresponds to 944–1300 (YSRKRNGTLY…CSLQNGGPEH (357 aa)). A Protein kinase domain is found at 979–1254 (ISIIRELGQG…SIQKELRPSF (276 aa)). Residues 985 to 993 (LGQGSFGMV) and lysine 1013 contribute to the ATP site. Aspartate 1115 serves as the catalytic Proton acceptor. Phosphotyrosine; by autocatalysis is present on residues tyrosine 1145 and tyrosine 1146. The segment at 1270–1300 (GLQPTTDAESSSPPTSKGASDCSLQNGGPEH) is disordered. The segment covering 1272-1300 (QPTTDAESSSPPTSKGASDCSLQNGGPEH) has biased composition (polar residues).

The protein belongs to the protein kinase superfamily. Tyr protein kinase family. Insulin receptor subfamily. As to quaternary structure, probable tetramer of 2 alpha and 2 beta chains linked by disulfide bonds. The alpha chains contribute to the formation of the ligand-binding domain, while the beta chains carry the kinase domain. In terms of processing, autophosphorylated on tyrosine residues between pH 7.9 and pH 10.5.

The protein resides in the membrane. The enzyme catalyses L-tyrosyl-[protein] + ATP = O-phospho-L-tyrosyl-[protein] + ADP + H(+). Receptor with tyrosine-protein kinase activity. Functions as a pH sensing receptor which is activated by increased extracellular pH. Activates an intracellular signaling pathway that involves IRS1 and AKT1/PKB. The protein is Insulin receptor-related protein (INSRR) of Cavia porcellus (Guinea pig).